The sequence spans 439 residues: Type 3 secretion system ATPase (439 aa).

Gly172 to Thr177 provides a ligand contact to ATP.

This sequence belongs to the ATPase alpha/beta chains family. T3SS ATPase subfamily. As to quaternary structure, the core secretion machinery of the T3SS is composed of approximately 20 different proteins, including cytoplasmic components, a base, an export apparatus and a needle. This subunit is part of the cytosolic complex. Forms homohexamers.

It localises to the cytoplasm. It carries out the reaction ATP + H2O + cellular proteinSide 1 = ADP + phosphate + cellular proteinSide 2.. In terms of biological role, ATPase component of the type III secretion system (T3SS), also called injectisome, which is used to inject bacterial effector proteins into eukaryotic host cells. Acts as a molecular motor to provide the energy that is required for the export of proteins. Required for type III secretion apparatus (T3SA) formation, proper protein secretion, host cell invasion and virulence. May play a critical role in T3SS substrate recognition, disassembly of the effector/chaperone complex and unfolding of the effector in an ATP-dependent manner prior to secretion. This is Type 3 secretion system ATPase from Yersinia pseudotuberculosis serotype I (strain IP32953).